A 334-amino-acid chain; its full sequence is MTSPSPAFGVLLVNLGTPDEPTPKAVKRFLKQFLSDPRVVDLSPWLWQPILQGIILNTRPKKVAKLYQSVWTEQGSPLMVISQCQAQKLATDLSATFNQTIPVELGMSYGNPSIESGFAKLKAQGAERIVVLPLYPQYSCSTVASVFDAVAHYLTRVRDIPELRFNKQYFAHEAYIAALAHSVKRHWKTHGQAEKLILSFHGIPLRYATEGDPYPEQCRTTAKLLAQALGLTDGQWQVCFQSRFGKEEWLTPYADELLADLPRQGVKSVDVICPAFATDCLETLEEISIGAKETFLHAGGEAYHFIPCLNDDELHIELLRLLVQEQTQSWISAE.

Fe cation is bound by residues His201 and Glu282.

It belongs to the ferrochelatase family.

It is found in the cytoplasm. It carries out the reaction heme b + 2 H(+) = protoporphyrin IX + Fe(2+). The protein operates within porphyrin-containing compound metabolism; protoheme biosynthesis; protoheme from protoporphyrin-IX: step 1/1. Catalyzes the ferrous insertion into protoporphyrin IX. The chain is Ferrochelatase 1 from Shewanella oneidensis (strain ATCC 700550 / JCM 31522 / CIP 106686 / LMG 19005 / NCIMB 14063 / MR-1).